We begin with the raw amino-acid sequence, 504 residues long: Anaerobic nitric oxide reductase transcription regulator NorR (504 aa).

4-aspartylphosphate is present on Asp57. The 230-residue stretch at 187 to 416 folds into the Sigma-54 factor interaction domain; that stretch reads MIGLSPGMTQ…LEHAIHRAVV (230 aa). ATP contacts are provided by residues 215–222 and 278–287; these read GETGTGKE and ADNGTLFLDE. The segment at residues 479 to 498 is a DNA-binding region (H-T-H motif); that stretch reads WAACARMLETDVANLHRLAK.

Its pathway is nitrogen metabolism; nitric oxide reduction. In terms of biological role, required for the expression of anaerobic nitric oxide (NO) reductase, acts as a transcriptional activator for at least the norVW operon. Activation also requires sigma-54. The chain is Anaerobic nitric oxide reductase transcription regulator NorR from Escherichia coli (strain SE11).